Here is a 68-residue protein sequence, read N- to C-terminus: Metallothionein-3 (68 aa).

Position 1 is an N-acetylmethionine (Met1). The beta stretch occupies residues Met1–Ser30. Residues Cys6, Cys8, Cys14, Cys16, Cys20, Cys22, Cys25, and Cys27 each coordinate a divalent metal cation. Residues Lys31–Gln68 are alpha. Ser33 is subject to Phosphoserine. 11 residues coordinate a divalent metal cation: Cys34, Cys35, Cys37, Cys38, Cys42, Cys45, Cys49, Cys51, Cys64, Cys66, and Cys67.

It belongs to the metallothionein superfamily. Type 1 family.

Its function is as follows. Binds heavy metals. Contains five zinc and one copper atoms per polypeptide chain and only a negligible amount of cadmium. This chain is Metallothionein-3 (MT3), found in Bos mutus grunniens (Wild yak).